The sequence spans 211 residues: Large ribosomal subunit protein uL4 (211 aa).

The tract at residues 44–94 is disordered; sequence RSGNHATKTRSEVRGGGKKPWSQKGTGHARQGSTRAPHWVGGGTVHGPQKR.

This sequence belongs to the universal ribosomal protein uL4 family. In terms of assembly, part of the 50S ribosomal subunit.

One of the primary rRNA binding proteins, this protein initially binds near the 5'-end of the 23S rRNA. It is important during the early stages of 50S assembly. It makes multiple contacts with different domains of the 23S rRNA in the assembled 50S subunit and ribosome. Functionally, forms part of the polypeptide exit tunnel. The protein is Large ribosomal subunit protein uL4 of Leptospira borgpetersenii serovar Hardjo-bovis (strain JB197).